A 1358-amino-acid chain; its full sequence is DNA-directed RNA polymerase subunit beta (1358 aa).

The segment covering 1033 to 1051 (QGLEDRKKEHEARFDDKKG) has biased composition (basic and acidic residues). The segment at 1033-1053 (QGLEDRKKEHEARFDDKKGKL) is disordered.

This sequence belongs to the RNA polymerase beta chain family. In terms of assembly, the RNAP catalytic core consists of 2 alpha, 1 beta, 1 beta' and 1 omega subunit. When a sigma factor is associated with the core the holoenzyme is formed, which can initiate transcription.

The catalysed reaction is RNA(n) + a ribonucleoside 5'-triphosphate = RNA(n+1) + diphosphate. Its function is as follows. DNA-dependent RNA polymerase catalyzes the transcription of DNA into RNA using the four ribonucleoside triphosphates as substrates. The protein is DNA-directed RNA polymerase subunit beta of Marinobacter nauticus (strain ATCC 700491 / DSM 11845 / VT8) (Marinobacter aquaeolei).